Consider the following 183-residue polypeptide: ATP-dependent protease subunit HslV (183 aa).

Thr-13 is a catalytic residue. Residues Gly-168, Cys-171, and Thr-174 each contribute to the Na(+) site.

This sequence belongs to the peptidase T1B family. HslV subfamily. A double ring-shaped homohexamer of HslV is capped on each side by a ring-shaped HslU homohexamer. The assembly of the HslU/HslV complex is dependent on binding of ATP.

It localises to the cytoplasm. The enzyme catalyses ATP-dependent cleavage of peptide bonds with broad specificity.. Allosterically activated by HslU binding. In terms of biological role, protease subunit of a proteasome-like degradation complex believed to be a general protein degrading machinery. This chain is ATP-dependent protease subunit HslV, found in Xanthomonas axonopodis pv. citri (strain 306).